The following is a 91-amino-acid chain: Small ribosomal subunit protein uS19c (91 aa).

It belongs to the universal ribosomal protein uS19 family.

Its subcellular location is the plastid. It localises to the organellar chromatophore. Protein S19 forms a complex with S13 that binds strongly to the 16S ribosomal RNA. In Paulinella chromatophora, this protein is Small ribosomal subunit protein uS19c.